The chain runs to 381 residues: Probable cyclic AMP-AMP-GMP nucleotide synthase (381 aa).

Serine 53 and arginine 56 together coordinate GTP. Active-site residues include aspartate 69 and aspartate 71. Mg(2+)-binding residues include aspartate 69 and aspartate 71. Arginine 109 serves as a coordination point for GTP. The active site involves aspartate 121. Positions 121 and 196 each coordinate Mg(2+). Positions 197, 204, 205, 210, and 307 each coordinate GTP. A disordered region spans residues 348-381; sequence GTKFPFPGPQGGDRSGGFTAPTQPAEPQKTGRFA.

This sequence belongs to the CD-NTase family. D02 subfamily. The cofactor is Mg(2+).

The enzyme catalyses GTP + 2 ATP = 3',3',3'-cAAG + 3 diphosphate. Functionally, cyclic nucleotide synthase (second messenger synthase) of a CBASS antivirus system. CBASS (cyclic oligonucleotide-based antiphage signaling system) provides immunity against bacteriophage. The CD-NTase protein synthesizes cyclic nucleotides in response to infection; these serve as specific second messenger signals. The signals activate a diverse range of effectors, leading to bacterial cell death and thus abortive phage infection. Cyclic nucleotide synthase, synthesizes a tricyclic nucleotide with AMP and GMP moieties, probably 3',3',3'-cyclic AMP-AMP-GMP (3'3'3'-cAAG). Controls the activity of the associated CBASS effector protein. In Salmonella paratyphi B (Salmonella enterica subsp. enterica serovar Paratyphi B), this protein is Probable cyclic AMP-AMP-GMP nucleotide synthase.